A 65-amino-acid polypeptide reads, in one-letter code: Sulfur carrier protein TtuB (65 aa).

Gly-65 is modified (1-thioglycine; alternate). Residue Gly-65 is modified to Glycyl adenylate; alternate. Gly-65 is covalently cross-linked (Glycyl cysteine thioester (Gly-Cys) (interchain with C-192 in TtuC); alternate). Gly-65 participates in a covalent cross-link: Glycyl lysine isopeptide (Gly-Lys) (interchain with K-? in acceptor proteins); alternate.

This sequence belongs to the TtuB family. Is able to form a heterocomplex with TtuA. In terms of processing, the C-terminal glycine residue of TtuB is first activated by TtuC as an acyl-adenylate (TtuB-COAMP), and then converted to the thiocarboxylate form (TtuB-COSH) by the cysteine desulfurases IscS or SufS.

It functions in the pathway tRNA modification. Required for the 2-thiolation of 5-methyluridine residue at position 54 in the T loop of tRNAs, leading to 5-methyl-2-thiouridine (m(5)s(2)U or s(2)T). This modification allows thermal stabilization of tRNAs in thermophilic microorganisms, and is essential for cell growth at high temperatures. Thiocarboxylated TtuB functions as the sulfur donor in the sulfurtransferase reaction catalyzed by TtuA. TtuB also functions as a protein modifier covalently attached to lysine residues of the target proteins TtuA and TtuC. TtuB conjugation might play a regulatory role to ensure appropriate sulfur transfer in cells. This is Sulfur carrier protein TtuB from Thermus thermophilus (strain ATCC BAA-163 / DSM 7039 / HB27).